Here is an 802-residue protein sequence, read N- to C-terminus: Copper-exporting P-type ATPase (802 aa).

HMA domains are found at residues 5–70 (KKTT…YGVA) and 72–138 (ETVE…YDAS). Residues Cys-16, Cys-19, Cys-83, and Cys-86 each coordinate Cu(+). 6 helical membrane passes run 161 to 181 (LIISAVLSLPLLMLMFVHLFN), 192 to 212 (WFQFILATPVQFIIGWQFYVG), 224 to 244 (MDVLVAVGTSAAYFYSIYEMV), 256 to 276 (LYFETSAVLITLILFGKYLEA), 411 to 431 (YFVPIVVGIALLTFIVWITLV), and 438 to 458 (PALVASISVLVIACPCALGLA). Catalysis depends on Asp-495, which acts as the 4-aspartylphosphate intermediate. Asp-690 and Asp-694 together coordinate Mg(2+). The next 2 helical transmembrane spans lie at 748 to 767 (LFWAFGYNIAGIPIAALGLL) and 771 to 790 (VAGAAMALSSVSVVTNALRL).

The protein belongs to the cation transport ATPase (P-type) (TC 3.A.3) family. Type IB subfamily.

The protein resides in the cell membrane. The enzyme catalyses Cu(+)(in) + ATP + H2O = Cu(+)(out) + ADP + phosphate + H(+). Its function is as follows. Involved in copper export. This Staphylococcus aureus (strain MW2) protein is Copper-exporting P-type ATPase (copA).